The sequence spans 44 residues: Peptide Hact-4 (44 aa).

Cystine bridges form between Cys-8/Cys-42, Cys-15/Cys-34, and Cys-20/Cys-43.

As to expression, expressed in tentacles.

Its subcellular location is the nematocyst. The protein resides in the secreted. Functionally, peptide with unknown function. Does not exhibit antimicrobial activity against Escherichia coli and Staphylococcus aureus. Does not exhibit any effect on human ion channel TRPV1 in a Xenopus laevis oocytes assay. The protein is Peptide Hact-4 of Heliofungia actiniformis (Mushroom coral).